The chain runs to 257 residues: Pyridoxine 5'-phosphate synthase (257 aa).

Asparagine 16 is a 3-amino-2-oxopropyl phosphate binding site. Residue 18 to 19 (DH) participates in 1-deoxy-D-xylulose 5-phosphate binding. Arginine 27 provides a ligand contact to 3-amino-2-oxopropyl phosphate. Catalysis depends on histidine 52, which acts as the Proton acceptor. Residues arginine 54 and histidine 59 each contribute to the 1-deoxy-D-xylulose 5-phosphate site. Catalysis depends on glutamate 79, which acts as the Proton acceptor. Residue threonine 109 participates in 1-deoxy-D-xylulose 5-phosphate binding. The active-site Proton donor is the histidine 200. Residues glycine 201 and 222–223 (GH) each bind 3-amino-2-oxopropyl phosphate.

Belongs to the PNP synthase family. As to quaternary structure, homooctamer; tetramer of dimers.

The protein resides in the cytoplasm. The enzyme catalyses 3-amino-2-oxopropyl phosphate + 1-deoxy-D-xylulose 5-phosphate = pyridoxine 5'-phosphate + phosphate + 2 H2O + H(+). It participates in cofactor biosynthesis; pyridoxine 5'-phosphate biosynthesis; pyridoxine 5'-phosphate from D-erythrose 4-phosphate: step 5/5. In terms of biological role, catalyzes the complicated ring closure reaction between the two acyclic compounds 1-deoxy-D-xylulose-5-phosphate (DXP) and 3-amino-2-oxopropyl phosphate (1-amino-acetone-3-phosphate or AAP) to form pyridoxine 5'-phosphate (PNP) and inorganic phosphate. This chain is Pyridoxine 5'-phosphate synthase, found in Burkholderia pseudomallei (strain 1710b).